Reading from the N-terminus, the 348-residue chain is Phospho-2-dehydro-3-deoxyheptonate aldolase, Trp-sensitive (348 aa).

This sequence belongs to the class-I DAHP synthase family.

It carries out the reaction D-erythrose 4-phosphate + phosphoenolpyruvate + H2O = 7-phospho-2-dehydro-3-deoxy-D-arabino-heptonate + phosphate. It functions in the pathway metabolic intermediate biosynthesis; chorismate biosynthesis; chorismate from D-erythrose 4-phosphate and phosphoenolpyruvate: step 1/7. In terms of biological role, stereospecific condensation of phosphoenolpyruvate (PEP) and D-erythrose-4-phosphate (E4P) giving rise to 3-deoxy-D-arabino-heptulosonate-7-phosphate (DAHP). This is Phospho-2-dehydro-3-deoxyheptonate aldolase, Trp-sensitive (aroH) from Buchnera aphidicola subsp. Baizongia pistaciae (strain Bp).